The chain runs to 515 residues: Chromosomal replication initiator protein DnaA (515 aa).

The interval 1 to 89 is domain I, interacts with DnaA modulators; the sequence is MVADQAVLSS…LLAISIDANL (89 aa). Positions 89–172 are domain II; sequence LQPPRTPSSE…APPSTSAETS (84 aa). Disordered stretches follow at residues 90 to 130 and 142 to 171; these read QPPR…SRRA and PPADVVPAANAAPNGNGKPTPAPPSTSAET. Low complexity-rich tracts occupy residues 102-114 and 143-160; these read SSLAGGPSGAAAP and PADVVPAANAAPNGNGKP. The segment at 173 to 389 is domain III, AAA+ region; the sequence is RLNDRYHFET…GALIRVTAFA (217 aa). Positions 217, 219, 220, and 221 each coordinate ATP. A domain IV, binds dsDNA region spans residues 390-515; that stretch reads SLNRQTVDIE…NEIKRKQRGA (126 aa).

The protein belongs to the DnaA family. As to quaternary structure, oligomerizes as a right-handed, spiral filament on DNA at oriC.

The protein localises to the cytoplasm. Its function is as follows. Plays an essential role in the initiation and regulation of chromosomal replication. ATP-DnaA binds to the origin of replication (oriC) to initiate formation of the DNA replication initiation complex once per cell cycle. Binds the DnaA box (a 9 base pair repeat at the origin) and separates the double-stranded (ds)DNA. Forms a right-handed helical filament on oriC DNA; dsDNA binds to the exterior of the filament while single-stranded (ss)DNA is stabiized in the filament's interior. The ATP-DnaA-oriC complex binds and stabilizes one strand of the AT-rich DNA unwinding element (DUE), permitting loading of DNA polymerase. After initiation quickly degrades to an ADP-DnaA complex that is not apt for DNA replication. Binds acidic phospholipids. The sequence is that of Chromosomal replication initiator protein DnaA from Micrococcus luteus (strain ATCC 4698 / DSM 20030 / JCM 1464 / CCM 169 / CCUG 5858 / IAM 1056 / NBRC 3333 / NCIMB 9278 / NCTC 2665 / VKM Ac-2230) (Micrococcus lysodeikticus).